The following is a 760-amino-acid chain: DEAD-box ATP-dependent RNA helicase 24 (760 aa).

Disordered regions lie at residues 1–76 (MSNR…GEVD) and 90–113 (QEMK…DDDD). A compositionally biased stretch (polar residues) spans 14 to 27 (NRQTSYSFERSQAP). The span at 41–64 (NSEDADLDNIDYMENEEAEEDIEE) shows a compositional bias: acidic residues. Residues 99–109 (KPKEKLERYKD) are compositionally biased toward basic and acidic residues. A Phosphoserine modification is found at Ser160. The Q motif signature appears at 228–256 (KTFEDCGFSSQIMSAIKKQAYEKPTAIQC). Residues 259 to 434 (LPIVLSGRDV…REILSDPIRV (176 aa)) form the Helicase ATP-binding domain. An ATP-binding site is contributed by 272–279 (AKTGSGKT). A DEAD box motif is present at residues 382–385 (DEAD). Positions 459 to 608 (KLPWLLEKLP…NVPPELTDLA (150 aa)) constitute a Helicase C-terminal domain. Disordered stretches follow at residues 604-638 (LTDL…KGVR), 647-666 (GFSS…SRSG), and 706-760 (FVSG…GWDN). Residues 615–628 (KSKRDGRKGGKKGR) are compositionally biased toward basic residues. A compositionally biased stretch (gly residues) spans 629–638 (GGGGGNKGVR). The segment covering 649–666 (SSESSRTPSSKAAPSRSG) has biased composition (polar residues). Over residues 707–716 (VSGGTIGGDM) the composition is skewed to gly residues. Residues 718-732 (RTQSQAPPVAPTQNA) show a composition bias toward polar residues. Residues 733–745 (SSHNSSQNHSQSS) are compositionally biased toward low complexity. Residues 750–760 (RERKRRSGWDN) show a composition bias toward basic residues.

The protein belongs to the DEAD box helicase family.

It carries out the reaction ATP + H2O = ADP + phosphate + H(+). This is DEAD-box ATP-dependent RNA helicase 24 (RH24) from Arabidopsis thaliana (Mouse-ear cress).